The following is a 554-amino-acid chain: (+)-delta-cadinene synthase isozyme XC1 (554 aa).

Residues 1–16 (MASQVSQMPSSSPLSS) are compositionally biased toward low complexity. Positions 1–23 (MASQVSQMPSSSPLSSNKDEMRP) are disordered. Asp307, Asp311, Asp451, and Glu455 together coordinate Mg(2+). Positions 307–311 (DDTYD) match the DDXXD motif motif.

This sequence belongs to the terpene synthase family. The cofactor is Mg(2+).

The enzyme catalyses (2E,6E)-farnesyl diphosphate = (1S,8aR)-delta-cadinene + diphosphate. It functions in the pathway secondary metabolite biosynthesis; terpenoid biosynthesis. Responsible for the cyclization of trans,trans-farnesyl diphosphate (FPP) to (+)-delta cadinene. This is (+)-delta-cadinene synthase isozyme XC1 from Gossypium arboreum (Tree cotton).